The sequence spans 339 residues: Deoxyhypusine hydroxylase (339 aa).

HEAT-like PBS-type repeat units follow at residues 71–97 (LKHE…VVKN) and 104–130 (CRHE…LRDD). Positions 73, 74, 106, and 107 each coordinate Fe cation. Residues 159 to 183 (EKLKPSDFTSIDPAPPLPMASSQPS) are disordered. HEAT-like PBS-type repeat units lie at residues 200 to 233 (QRYR…GLKD), 238 to 264 (FRHE…TLSD), and 271 to 298 (VRHE…FLND). Fe cation-binding residues include His240, Glu241, His273, and Glu274.

The protein belongs to the deoxyhypusine hydroxylase family. It depends on Fe(2+) as a cofactor.

It localises to the cytoplasm. It is found in the nucleus. It carries out the reaction [eIF5A protein]-deoxyhypusine + AH2 + O2 = [eIF5A protein]-hypusine + A + H2O. The protein operates within protein modification; eIF5A hypusination. In terms of biological role, catalyzes the hydroxylation of the N(6)-(4-aminobutyl)-L-lysine intermediate to form hypusine, an essential post-translational modification only found in mature eIF-5A factor. This Aspergillus oryzae (strain ATCC 42149 / RIB 40) (Yellow koji mold) protein is Deoxyhypusine hydroxylase (lia1).